We begin with the raw amino-acid sequence, 829 residues long: Cadherin-16 (829 aa).

An N-terminal signal peptide occupies residues methionine 1–valine 18. Residues glutamate 19 to alanine 786 are Extracellular-facing. 6 consecutive Cadherin domains span residues leucine 25–phenylalanine 126, tyrosine 131–glutamate 235, glutamate 242–cysteine 336, proline 341–phenylalanine 449, glycine 455–leucine 564, and tyrosine 569–leucine 665. N-linked (GlcNAc...) asparagine glycosylation is found at asparagine 517, asparagine 602, and asparagine 722. The ectodomain G stretch occupies residues proline 666–alanine 786. The helical transmembrane segment at valine 787–histidine 807 threads the bilayer. Over leucine 808–alanine 829 the chain is Cytoplasmic.

In terms of tissue distribution, kidney specific. Limited to the basolateral membranes of renal tubular epithelial cells.

Its subcellular location is the cell membrane. Its function is as follows. Cadherins are calcium-dependent cell adhesion proteins. They preferentially interact with themselves in a homophilic manner in connecting cells; cadherins may thus contribute to the sorting of heterogeneous cell types. The polypeptide is Cadherin-16 (CDH16) (Oryctolagus cuniculus (Rabbit)).